Consider the following 365-residue polypeptide: 25S rRNA (uridine(2843)-N(3))-methyltransferase (365 aa).

Belongs to the class I-like SAM-binding methyltransferase superfamily.

It localises to the cytoplasm. The protein localises to the nucleus. It carries out the reaction uridine(2843) in 25S rRNA + S-adenosyl-L-methionine = N(3)-methyluridine(2843) in 25S rRNA + S-adenosyl-L-homocysteine + H(+). In terms of biological role, S-adenosyl-L-methionine-dependent methyltransferase that specifically methylates the N(3) position of uridine 2843 (m3U2843) in 25S rRNA. The polypeptide is 25S rRNA (uridine(2843)-N(3))-methyltransferase (BMT6) (Saccharomyces cerevisiae (strain ATCC 204508 / S288c) (Baker's yeast)).